The primary structure comprises 352 residues: Probable RNA methyltransferase CV_2253 (352 aa).

Residue E91 is the Proton acceptor of the active site. Positions L94–D320 constitute a Radical SAM core domain. An intrachain disulfide couples C101 to C325. 3 residues coordinate [4Fe-4S] cluster: C108, C112, and C115. S-adenosyl-L-methionine-binding positions include G153–E154, S183, S206–H208, and N282. The active-site S-methylcysteine intermediate is C325.

Belongs to the radical SAM superfamily. RlmN family. Requires [4Fe-4S] cluster as cofactor.

It is found in the cytoplasm. This Chromobacterium violaceum (strain ATCC 12472 / DSM 30191 / JCM 1249 / CCUG 213 / NBRC 12614 / NCIMB 9131 / NCTC 9757 / MK) protein is Probable RNA methyltransferase CV_2253.